The primary structure comprises 106 residues: Large ribosomal subunit protein eL30 (106 aa).

The protein belongs to the eukaryotic ribosomal protein eL30 family.

This Sulfurisphaera tokodaii (strain DSM 16993 / JCM 10545 / NBRC 100140 / 7) (Sulfolobus tokodaii) protein is Large ribosomal subunit protein eL30 (rpl30e).